Here is a 196-residue protein sequence, read N- to C-terminus: Cupin-domain-containing oxidoreductase srdD (196 aa).

A cupin-like domain region spans residues Asp-99–Met-165.

This sequence belongs to the virC family.

Highly reducing polyketide synthase; part of the gene cluster that mediates the biosynthesis of sordarial, a salicylic aldehyde structurally related to the phytotoxin pyriculol. The most interesting aspect of this pathway is formation of an aromatic product from the highly reducing polyketide synthase srdA. SrdA synthesizes a reduced polyketide chain from one molecule of acetyl-CoA and five molecules of malonyl-CoA. The polyketide chain is then reductively released as an aldehyde. The oxidoreductases srdC, srdD and srdE then oxidize one of the hydroxy groups to facilitate the intramolecular aldol condensation, followed by dehydration to yield a salicylic aldehyde. This aldehyde can undergo facile reduction by endogenous reductases to yield the alcohol 1-hydroxy-2-hydroxymethyl-3-pent-1,3-dienylbenzene. The flavin-dependent srdI counteract against the propensity of the aldehydes to be reduced under physiological conditions and is responsible for reoxidizing 1-hydroxy-2-hydroxymethyl-3-pent-1,3-dienylbenzene back to the salicylic aldehyde. This salicylic aldehyde is then selectively epoxidized by the cupin-domain-containing oxidoreductase srdB to yield the epoxide, which can be hydrolyzed stereoselectively by the hydrolase srdG to give the final product sordarial. The polypeptide is Cupin-domain-containing oxidoreductase srdD (Neurospora crassa (strain ATCC 24698 / 74-OR23-1A / CBS 708.71 / DSM 1257 / FGSC 987)).